The sequence spans 188 residues: Threonylcarbamoyl-AMP synthase (188 aa).

The YrdC-like domain occupies 3–188 (QLHPSEIKDL…RSGKILRNGQ (186 aa)).

This sequence belongs to the SUA5 family. TsaC subfamily.

It is found in the cytoplasm. It carries out the reaction L-threonine + hydrogencarbonate + ATP = L-threonylcarbamoyladenylate + diphosphate + H2O. Functionally, required for the formation of a threonylcarbamoyl group on adenosine at position 37 (t(6)A37) in tRNAs that read codons beginning with adenine. Catalyzes the conversion of L-threonine, HCO(3)(-)/CO(2) and ATP to give threonylcarbamoyl-AMP (TC-AMP) as the acyladenylate intermediate, with the release of diphosphate. In Shewanella sp. (strain ANA-3), this protein is Threonylcarbamoyl-AMP synthase.